We begin with the raw amino-acid sequence, 225 residues long: Suppressor of cytokine signaling 3 (225 aa).

Residues leucine 22–leucine 33 are kinase inhibitory region (KIR). The segment at valine 34–glycine 45 is extended SH2 subdomain (ESS). The 97-residue stretch at phenylalanine 46–glutamate 142 folds into the SH2 domain. Residues threonine 141 to threonine 160 form a disordered region. One can recognise an SOCS box domain in the interval valine 177–proline 224.

In terms of assembly, interacts with multiple activated proteins of the tyrosine kinase signaling pathway including IGF1 receptor, insulin receptor and JAK2. Binding to JAK2 is mediated through the KIR and SH2 domains to a phosphorylated tyrosine residue within the JAK2 JH1 domain. Binds specific activated tyrosine residues of the leptin, EPO, IL12, GSCF and gp130 receptors. Interaction with CSNK1E stabilize SOCS3 protein. Component of the probable ECS(SOCS3) E3 ubiquitin-protein ligase complex which contains CUL5, RNF7/RBX2, Elongin BC complex and SOCS3. Interacts with CUL5, RNF7, ELOB and ELOC. Interacts with FGFR3. Interacts with INSR. Interacts with BCL10; this interaction may interfere with BCL10-binding with PELI2. Interacts with NOD2 (via CARD domain); the interaction promotes NOD2 degradation. In terms of processing, phosphorylated on tyrosine residues after stimulation by the cytokines, IL-2, EPO or IGF1.

The protein operates within protein modification; protein ubiquitination. In terms of biological role, SOCS family proteins form part of a classical negative feedback system that regulates cytokine signal transduction. SOCS3 is involved in negative regulation of cytokines that signal through the JAK/STAT pathway. Inhibits cytokine signal transduction by binding to tyrosine kinase receptors including IL6ST/gp130, LIF, erythropoietin, insulin, IL12, GCSF and leptin receptors. Binding to JAK2 inhibits its kinase activity and regulates IL6 signaling. Suppresses fetal liver erythropoiesis. Regulates onset and maintenance of allergic responses mediated by T-helper type 2 cells. Probable substrate recognition component of a SCF-like ECS (Elongin BC-CUL2/5-SOCS-box protein) E3 ubiquitin-protein ligase complex which mediates the ubiquitination and subsequent proteasomal degradation of target proteins. The chain is Suppressor of cytokine signaling 3 from Rattus norvegicus (Rat).